Reading from the N-terminus, the 589-residue chain is Protein POF1B (589 aa).

Residues 334-443 (TFSNIREELG…QNLRMQVSET (110 aa)) are a coiled coil.

Interacts with nonmuscle actin.

Its subcellular location is the cell junction. It is found in the tight junction. Plays a key role in the organization of epithelial monolayers by regulating the actin cytoskeleton. May be involved in ovary development. The sequence is that of Protein POF1B (POF1B) from Homo sapiens (Human).